Consider the following 930-residue polypeptide: Isoleucine--tRNA ligase (930 aa).

A 'HIGH' region motif is present at residues 57-67 (PYANGNIHVGH). Glu554 contacts L-isoleucyl-5'-AMP. The short motif at 595-599 (KMSKS) is the 'KMSKS' region element. Residue Lys598 participates in ATP binding. Residues Cys888, Cys891, Cys908, and Cys911 each contribute to the Zn(2+) site.

The protein belongs to the class-I aminoacyl-tRNA synthetase family. IleS type 1 subfamily. Monomer. It depends on Zn(2+) as a cofactor.

Its subcellular location is the cytoplasm. The enzyme catalyses tRNA(Ile) + L-isoleucine + ATP = L-isoleucyl-tRNA(Ile) + AMP + diphosphate. Catalyzes the attachment of isoleucine to tRNA(Ile). As IleRS can inadvertently accommodate and process structurally similar amino acids such as valine, to avoid such errors it has two additional distinct tRNA(Ile)-dependent editing activities. One activity is designated as 'pretransfer' editing and involves the hydrolysis of activated Val-AMP. The other activity is designated 'posttransfer' editing and involves deacylation of mischarged Val-tRNA(Ile). The chain is Isoleucine--tRNA ligase from Streptococcus pneumoniae serotype 19F (strain G54).